Consider the following 264-residue polypeptide: MNYVKKALYDEMLSFYHTTLGMEHEDRLRLRGQIGHLVRVARKEIPDTLETKAKIHLLLQLFYGEWGFHCDPESYFLSSNLYLNDVLETRRGMPVSLGAILLYIADKLNLPLYPVNFPTQLVIRAEVEGEVAFINPWDGQYISQALLHKWYEGAMGFGMTLTPTELAIANVGDLLGRFRQLAKNALIREEKNDEAFCYIARLIHYNPEDPYEIRDRGLVLAQMGCYHVATEDFQYFIDQCPQDPTALLLKNQLEELKQDTYPIH.

It belongs to the UPF0162 family.

The polypeptide is UPF0162 protein PM0557 (Pasteurella multocida (strain Pm70)).